Here is a 551-residue protein sequence, read N- to C-terminus: Hydroxymethylpyrimidine/phosphomethylpyrimidine kinase THI20 (551 aa).

4-amino-5-hydroxymethyl-2-methylpyrimidine is bound at residue Gln-64. The Nucleophile role is filled by Cys-468. The active-site Proton donor is Glu-540.

The protein in the N-terminal section; belongs to the ThiD family. In the C-terminal section; belongs to the thiaminase-2 family.

It carries out the reaction 4-amino-5-hydroxymethyl-2-methylpyrimidine + ATP = 4-amino-2-methyl-5-(phosphooxymethyl)pyrimidine + ADP + H(+). The enzyme catalyses 4-amino-2-methyl-5-(phosphooxymethyl)pyrimidine + ATP = 4-amino-2-methyl-5-(diphosphooxymethyl)pyrimidine + ADP. The catalysed reaction is thiamine + H2O = 5-(2-hydroxyethyl)-4-methylthiazole + 4-amino-5-hydroxymethyl-2-methylpyrimidine + H(+). The protein operates within cofactor biosynthesis; thiamine diphosphate biosynthesis; 4-amino-2-methyl-5-diphosphomethylpyrimidine from 5-amino-1-(5-phospho-D-ribosyl)imidazole: step 2/3. It participates in cofactor biosynthesis; thiamine diphosphate biosynthesis; 4-amino-2-methyl-5-diphosphomethylpyrimidine from 5-amino-1-(5-phospho-D-ribosyl)imidazole: step 3/3. Trifunctional protein with both thiamine biosynthetic and degradative activity. Within the thiamine biosynthesis pathway, catalyzes the phosphorylation of hydroxymethylpyrimidine (HMP) to hydroxymethylpyrimidine phosphate (HMP-P), as well as of HMP-P to HMP-PP. Also has thiaminase II activity and degrades thiamine using water as the nucleophile, resulting only in the formation of HMP (4-amino-2-methyl-5-hydroxymethylpyrimidine) and Thz (4-methyl-5-thiazole ethanol). The protein is Hydroxymethylpyrimidine/phosphomethylpyrimidine kinase THI20 of Saccharomyces cerevisiae (strain ATCC 204508 / S288c) (Baker's yeast).